The sequence spans 513 residues: MAEVGGTIPRSNRELQRCVLLTTTIMSIPGVNASFSSTPERLNSPVTIPAVMFIFGVVGNLVAIVVLCKSRKEQKETTFYTLVCGLAVTDLLGTLLVSPVTIATYMKGQWPGDQALCDYSTFILLFFGLSGLSIICAMSIERYLAINHAYFYSHYVDKRLAGLTLFAIYASNVLFCALPNMGLGRSERQYPGTWCFIDWTTNVTAYAAFSYMYAGFSSFLILATVLCNVLVCGALLRMHRQFMRRTSLGTEQHHAAAAAAVASVACRGHAGASPALQRLSDFRRRRSFRRIAGAEIQMVILLIATSLVVLICSIPLVVRVFINQLYQPNVVKDISRNPDLQAIRIASVNPILDPWIYILLRKTVLSKAIEKIKCLFCRIGGSGRDSSAQHCSESRRTSSAMSGHSRSFLARELKEISSTSQTLLYLPDLTESSLGGRNLLPGSHGMGLTQADTTSLRTLRISETSDSSQGQDSESVLLVDEVSGSHREEPASKGNSLQVTFPSETLKLSEKCI.

The Extracellular portion of the chain corresponds to Met1 to Ser44. An N-linked (GlcNAc...) asparagine glycan is attached at Asn32. Residues Pro45–Cys68 form a helical membrane-spanning segment. Residues Lys69–Tyr80 are Cytoplasmic-facing. A helical transmembrane segment spans residues Thr81–Thr104. Over Tyr105–Thr121 the chain is Extracellular. Cys117 and Cys195 are joined by a disulfide. Residues Phe122–Ile140 form a helical membrane-spanning segment. Residues Glu141–Leu160 lie on the Cytoplasmic side of the membrane. The helical transmembrane segment at Ala161 to Arg185 threads the bilayer. Residues Ser186–Phe209 are Extracellular-facing. Residues Ser210–Leu236 form a helical membrane-spanning segment. The Cytoplasmic portion of the chain corresponds to Arg237 to Glu295. The chain crosses the membrane as a helical span at residues Ile296–Asn323. Over Gln324–Leu340 the chain is Extracellular. A helical transmembrane segment spans residues Gln341–Leu360. The Cytoplasmic portion of the chain corresponds to Arg361–Ile513. Positions Gly383–Gly403 are disordered. Polar residues predominate over residues Arg384–Gly403. Ser402, Ser405, and Ser407 each carry phosphoserine.

It belongs to the G-protein coupled receptor 1 family. In terms of assembly, interacts with FEM1A. Phosphorylation mediates agonist-mediated desensitization by promoting cytoplasmic retention. As to expression, abundant expression in ileum, thymus and mastocytoma P-815 cells. Also observed in lung, spleen, heart and uterus.

Its subcellular location is the cell membrane. In terms of biological role, receptor for prostaglandin E2 (PGE2). The activity of this receptor is mediated by G(s) proteins that stimulate adenylate cyclase. Has a relaxing effect on smooth muscle. May play an important role in regulating renal hemodynamics, intestinal epithelial transport, adrenal aldosterone secretion, and uterine function. This Mus musculus (Mouse) protein is Prostaglandin E2 receptor EP4 subtype (Ptger4).